Consider the following 338-residue polypeptide: Fructose-1,6-bisphosphatase class 1 1 (338 aa).

Residues Glu94, Asp116, Leu118, and Asp119 each contribute to the Mg(2+) site. Substrate contacts are provided by residues 119 to 122 (DGSS), Asn210, and Lys276. Glu282 provides a ligand contact to Mg(2+).

The protein belongs to the FBPase class 1 family. Homotetramer. It depends on Mg(2+) as a cofactor.

The protein localises to the cytoplasm. The enzyme catalyses beta-D-fructose 1,6-bisphosphate + H2O = beta-D-fructose 6-phosphate + phosphate. The protein operates within carbohydrate biosynthesis; gluconeogenesis. This Paraburkholderia phymatum (strain DSM 17167 / CIP 108236 / LMG 21445 / STM815) (Burkholderia phymatum) protein is Fructose-1,6-bisphosphatase class 1 1.